We begin with the raw amino-acid sequence, 229 residues long: Large ribosomal subunit protein uL1 (229 aa).

Belongs to the universal ribosomal protein uL1 family. Part of the 50S ribosomal subunit.

Binds directly to 23S rRNA. The L1 stalk is quite mobile in the ribosome, and is involved in E site tRNA release. Its function is as follows. Protein L1 is also a translational repressor protein, it controls the translation of the L11 operon by binding to its mRNA. This Lactiplantibacillus plantarum (strain ATCC BAA-793 / NCIMB 8826 / WCFS1) (Lactobacillus plantarum) protein is Large ribosomal subunit protein uL1.